The sequence spans 297 residues: Bifunctional protein FolD 2 (297 aa).

NADP(+)-binding positions include 177 to 179 (GKS), Ile202, and Ile243.

This sequence belongs to the tetrahydrofolate dehydrogenase/cyclohydrolase family. In terms of assembly, homodimer.

It catalyses the reaction (6R)-5,10-methylene-5,6,7,8-tetrahydrofolate + NADP(+) = (6R)-5,10-methenyltetrahydrofolate + NADPH. The enzyme catalyses (6R)-5,10-methenyltetrahydrofolate + H2O = (6R)-10-formyltetrahydrofolate + H(+). The protein operates within one-carbon metabolism; tetrahydrofolate interconversion. Catalyzes the oxidation of 5,10-methylenetetrahydrofolate to 5,10-methenyltetrahydrofolate and then the hydrolysis of 5,10-methenyltetrahydrofolate to 10-formyltetrahydrofolate. This is Bifunctional protein FolD 2 from Rhizorhabdus wittichii (strain DSM 6014 / CCUG 31198 / JCM 15750 / NBRC 105917 / EY 4224 / RW1) (Sphingomonas wittichii).